A 162-amino-acid polypeptide reads, in one-letter code: MNRIKDFFRTFLLFELIKGMMLTGRNMFARKITVYFPEEKTPQSPRFRGLHALRRYPNGEERCIACKLCEAVCPALAITIESEQREDGTRRTTRYDIDLTKCIFCGFCEESCPVDSIVETRILEYHGEKRGDLIYTKQMLLAVGDRYEEQIAKDRAADAGYR.

4Fe-4S ferredoxin-type domains follow at residues 53–83 and 93–122; these read LRRYPNGEERCIACKLCEAVCPALAITIESE and TRYDIDLTKCIFCGFCEESCPVDSIVETRI. [4Fe-4S] cluster-binding residues include C63, C66, C69, C73, C102, C105, C108, and C112.

Belongs to the complex I 23 kDa subunit family. NDH-1 is composed of 14 different subunits. Subunits NuoA, H, J, K, L, M, N constitute the membrane sector of the complex. [4Fe-4S] cluster serves as cofactor.

It localises to the cell inner membrane. It catalyses the reaction a quinone + NADH + 5 H(+)(in) = a quinol + NAD(+) + 4 H(+)(out). Functionally, NDH-1 shuttles electrons from NADH, via FMN and iron-sulfur (Fe-S) centers, to quinones in the respiratory chain. The immediate electron acceptor for the enzyme in this species is believed to be ubiquinone. Couples the redox reaction to proton translocation (for every two electrons transferred, four hydrogen ions are translocated across the cytoplasmic membrane), and thus conserves the redox energy in a proton gradient. The protein is NADH-quinone oxidoreductase subunit I 2 of Nitrosospira multiformis (strain ATCC 25196 / NCIMB 11849 / C 71).